The following is a 707-amino-acid chain: UvrABC system protein C (707 aa).

Positions 14 to 94 (AEPGCYLMKD…IKKHRPRFNV (81 aa)) constitute a GIY-YIG domain. In terms of domain architecture, UVR spans 206–241 (GELVERLRGRMAGAAEGLRFEEAARLRDQLQAVERS). The segment at 655–707 (DAPPIAADEPSGAPAGAPGGGPAEASPEAVAAATEAEIDAALADEDASPEPAA) is disordered. Composition is skewed to low complexity over residues 660 to 670 (AADEPSGAPAG) and 677 to 689 (AEAS…AATE). Residues 690 to 707 (AEIDAALADEDASPEPAA) are compositionally biased toward acidic residues.

This sequence belongs to the UvrC family. Interacts with UvrB in an incision complex.

The protein resides in the cytoplasm. In terms of biological role, the UvrABC repair system catalyzes the recognition and processing of DNA lesions. UvrC both incises the 5' and 3' sides of the lesion. The N-terminal half is responsible for the 3' incision and the C-terminal half is responsible for the 5' incision. The sequence is that of UvrABC system protein C from Anaeromyxobacter dehalogenans (strain 2CP-1 / ATCC BAA-258).